A 160-amino-acid chain; its full sequence is Serine-protein kinase RsbW (160 aa).

This sequence belongs to the anti-sigma-factor family.

The enzyme catalyses L-seryl-[protein] + ATP = O-phospho-L-seryl-[protein] + ADP + H(+). The catalysed reaction is L-threonyl-[protein] + ATP = O-phospho-L-threonyl-[protein] + ADP + H(+). Functionally, negative regulator of sigma-B activity. Phosphorylates and inactivates its specific antagonist protein, RsbV. Upon phosphorylation of RsbV, RsbW is released and binds to sigma-B, thereby blocking its ability to form an RNA polymerase holoenzyme (E-sigma-B). In Bacillus cereus (strain ATCC 10987 / NRS 248), this protein is Serine-protein kinase RsbW.